Consider the following 91-residue polypeptide: Lipolysis-activating peptide 1-alpha chain (91 aa).

Positions 1–22 (MMKLVLFGIIVILFSLIGSIHG) are cleaved as a signal peptide. An LCN-type CS-alpha/beta domain is found at 24 to 87 (SGNYPLNPYG…VWNAVKKHCK (64 aa)). Cystine bridges form between C38–C61, C47–C66, and C51–C68.

The protein belongs to the long (3 C-C) scorpion toxin superfamily. As to quaternary structure, monomer (edited version) and heterodimer (non-edited version) of this alpha chain and a beta chain (AC P84809). In terms of tissue distribution, expressed by the venom gland.

It localises to the secreted. Functionally, the heterodimer non-edited LVP1 induces lipolysis in rat adipocytes. Induction of lipolysis by LVP1 appears to be mediated through the beta-2 adrenergic receptor pathway (ADRB2). Intracerebroventricular injection is not toxic to mice. In terms of biological role, the edited BmKBTx-like, similar to beta-toxins, may modulate voltage-gated sodium channels (Nav) and may block voltage-gated potassium channels (Kv). In Buthus occitanus tunetanus (Common European scorpion), this protein is Lipolysis-activating peptide 1-alpha chain.